Here is a 277-residue protein sequence, read N- to C-terminus: Probable endonuclease 4 (277 aa).

9 residues coordinate Zn(2+): histidine 67, histidine 107, glutamate 141, aspartate 173, histidine 176, histidine 210, aspartate 223, histidine 225, and glutamate 255.

The protein belongs to the AP endonuclease 2 family. Zn(2+) is required as a cofactor.

It catalyses the reaction Endonucleolytic cleavage to 5'-phosphooligonucleotide end-products.. Its function is as follows. Endonuclease IV plays a role in DNA repair. It cleaves phosphodiester bonds at apurinic or apyrimidinic (AP) sites, generating a 3'-hydroxyl group and a 5'-terminal sugar phosphate. The protein is Probable endonuclease 4 of Haloarcula marismortui (strain ATCC 43049 / DSM 3752 / JCM 8966 / VKM B-1809) (Halobacterium marismortui).